A 237-amino-acid chain; its full sequence is LexA repressor (237 aa).

Residues 26–46 (FDEMKIALELTSKSGIHRLIT) constitute a DNA-binding region (H-T-H motif). Catalysis depends on for autocatalytic cleavage activity residues S158 and K196.

The protein belongs to the peptidase S24 family. Homodimer.

The enzyme catalyses Hydrolysis of Ala-|-Gly bond in repressor LexA.. Its function is as follows. Represses a number of genes involved in the response to DNA damage (SOS response), including recA and lexA. In the presence of single-stranded DNA, RecA interacts with LexA causing an autocatalytic cleavage which disrupts the DNA-binding part of LexA, leading to derepression of the SOS regulon and eventually DNA repair. In Bartonella quintana (strain Toulouse) (Rochalimaea quintana), this protein is LexA repressor.